Reading from the N-terminus, the 118-residue chain is Large ribosomal subunit protein uL18 (118 aa).

The segment at 1–24 is disordered; the sequence is MISKPDKNKIRQKRHRRVRGKLSG. The span at 10-20 shows a compositional bias: basic residues; it reads IRQKRHRRVRG.

It belongs to the universal ribosomal protein uL18 family. Part of the 50S ribosomal subunit; part of the 5S rRNA/L5/L18/L25 subcomplex. Contacts the 5S and 23S rRNAs.

Functionally, this is one of the proteins that bind and probably mediate the attachment of the 5S RNA into the large ribosomal subunit, where it forms part of the central protuberance. This Streptococcus agalactiae serotype III (strain NEM316) protein is Large ribosomal subunit protein uL18.